The sequence spans 160 residues: 6,7-dimethyl-8-ribityllumazine synthase (160 aa).

5-amino-6-(D-ribitylamino)uracil is bound by residues W28, S59 to E61, and V82 to I84. (2S)-2-hydroxy-3-oxobutyl phosphate is bound at residue G87–T88. H90 acts as the Proton donor in catalysis. Residue F115 coordinates 5-amino-6-(D-ribitylamino)uracil. R129 is a (2S)-2-hydroxy-3-oxobutyl phosphate binding site.

Belongs to the DMRL synthase family.

The enzyme catalyses (2S)-2-hydroxy-3-oxobutyl phosphate + 5-amino-6-(D-ribitylamino)uracil = 6,7-dimethyl-8-(1-D-ribityl)lumazine + phosphate + 2 H2O + H(+). It participates in cofactor biosynthesis; riboflavin biosynthesis; riboflavin from 2-hydroxy-3-oxobutyl phosphate and 5-amino-6-(D-ribitylamino)uracil: step 1/2. Catalyzes the formation of 6,7-dimethyl-8-ribityllumazine by condensation of 5-amino-6-(D-ribitylamino)uracil with 3,4-dihydroxy-2-butanone 4-phosphate. This is the penultimate step in the biosynthesis of riboflavin. This chain is 6,7-dimethyl-8-ribityllumazine synthase, found in Clavibacter sepedonicus (Clavibacter michiganensis subsp. sepedonicus).